Consider the following 203-residue polypeptide: dCTP deaminase (203 aa).

Residues 105-110 (RSSLGR), Asp123, 131-133 (TLE), Gln152, Tyr166, Lys173, and Gln177 contribute to the dCTP site. Residue Glu133 is the Proton donor/acceptor of the active site. The disordered stretch occupies residues 164–203 (RPYGVERGSKYQDQDGPQASRIGSDPEFHSDENQAAEHES). Over residues 166-176 (YGVERGSKYQD) the composition is skewed to basic and acidic residues. Over residues 187–203 (SDPEFHSDENQAAEHES) the composition is skewed to basic and acidic residues.

This sequence belongs to the dCTP deaminase family. Homotrimer.

It catalyses the reaction dCTP + H2O + H(+) = dUTP + NH4(+). It participates in pyrimidine metabolism; dUMP biosynthesis; dUMP from dCTP (dUTP route): step 1/2. Catalyzes the deamination of dCTP to dUTP. This chain is dCTP deaminase, found in Halorubrum lacusprofundi (strain ATCC 49239 / DSM 5036 / JCM 8891 / ACAM 34).